The chain runs to 77 residues: Protein OPG128 (77 aa).

It belongs to the orthopoxvirus OPG128 family. As to quaternary structure, interacts with sulfhydryl oxidase OPG072; this interaction involves formation of a transient disulfide-bonded intermediate, allowing disulfide bond transfer. Interacts with OPG088; this interaction involves formation of a transient disulfide-bonded intermediate, allowing disulfide bond transfer.

Its function is as follows. Late protein which probably participates in disulfide bond formation by functioning as a thiol-disulfide transfer protein between membrane-associated OPG072 and OPG08. The complete pathway for formation of disulfide bonds in intracellular virion membrane proteins sequentially involves oxidation of OPG072, OPG128 and OPG08. This is Protein OPG128 (OPG128) from Monkeypox virus.